A 255-amino-acid chain; its full sequence is 1-(5-phosphoribosyl)-5-[(5-phosphoribosylamino)methylideneamino] imidazole-4-carboxamide isomerase (255 aa).

The Proton acceptor role is filled by D8. The Proton donor role is filled by D129.

The protein belongs to the HisA/HisF family.

It localises to the cytoplasm. It catalyses the reaction 1-(5-phospho-beta-D-ribosyl)-5-[(5-phospho-beta-D-ribosylamino)methylideneamino]imidazole-4-carboxamide = 5-[(5-phospho-1-deoxy-D-ribulos-1-ylimino)methylamino]-1-(5-phospho-beta-D-ribosyl)imidazole-4-carboxamide. It functions in the pathway amino-acid biosynthesis; L-histidine biosynthesis; L-histidine from 5-phospho-alpha-D-ribose 1-diphosphate: step 4/9. This Prochlorococcus marinus (strain MIT 9301) protein is 1-(5-phosphoribosyl)-5-[(5-phosphoribosylamino)methylideneamino] imidazole-4-carboxamide isomerase.